The following is a 173-amino-acid chain: Alpha-crystallin A chain (173 aa).

N-acetylmethionine is present on M1. The interval 1-63 is required for complex formation with BFSP1 and BFSP2; the sequence is MDIAIQHPWF…RSVLDSGVSE (63 aa). Q6 is subject to Deamidated glutamine; partial. S45 is subject to Phosphoserine. Residue Q50 is modified to Deamidated glutamine; partial. Residues 52-162 enclose the sHSP domain; that stretch reads LFRSVLDSGV…GHSERAIPVS (111 aa). K70 is modified (N6-acetyllysine). Deamidated glutamine; partial is present on Q90. An N6-acetyllysine modification is found at K99. A Zn(2+)-binding site is contributed by H100. N101 carries the deamidated asparagine; partial modification. Positions 102 and 107 each coordinate Zn(2+). A Phosphoserine modification is found at S122. N123 carries the post-translational modification Deamidated asparagine; partial. The disordered stretch occupies residues 144–173; the sequence is PKIPSGMDAGHSERAIPVSREEKPSSAPSS. Residues 153-167 are compositionally biased toward basic and acidic residues; it reads GHSERAIPVSREEKP. Position 154 (H154) interacts with Zn(2+). S162 carries an O-linked (GlcNAc) serine glycan.

The protein belongs to the small heat shock protein (HSP20) family. As to quaternary structure, heteromer composed of three CRYAA and one CRYAB subunits. Inter-subunit bridging via zinc ions enhances stability, which is crucial as there is no protein turn over in the lens. Can also form homodimers and homotetramers (dimers of dimers) which serve as the building blocks of homooligomers. Within homooligomers, the zinc-binding motif is created from residues of 3 different molecules. His-100 and Glu-102 from one molecule are ligands of the zinc ion, and His-107 and His-154 residues from additional molecules complete the site with tetrahedral coordination geometry. Part of a complex required for lens intermediate filament formation composed of BFSP1, BFSP2 and CRYAA. Post-translationally, acetylation at Lys-70 may increase chaperone activity. In terms of processing, undergoes age-dependent proteolytical cleavage at the C-terminus.

It is found in the cytoplasm. The protein localises to the nucleus. In terms of biological role, contributes to the transparency and refractive index of the lens. Acts as a chaperone, preventing aggregation of various proteins under a wide range of stress conditions. Required for the correct formation of lens intermediate filaments as part of a complex composed of BFSP1, BFSP2 and CRYAA. The polypeptide is Alpha-crystallin A chain (CRYAA) (Ceratotherium simum (White rhinoceros)).